We begin with the raw amino-acid sequence, 153 residues long: MSKHSLIENLKEQIEPIAEGLDYELYHIEFVKEGKENYLRIYIDSENGVSLEGCEKVSRAISELLDDIDPIQESYYLEVSSPGIDRVLYTDKHLEKYKSYNIVLNLYSPIDKKKKYEGELVDFNENEIDIKVEENIVTIPREKISKTTLKGEL.

This sequence belongs to the RimP family.

It localises to the cytoplasm. Its function is as follows. Required for maturation of 30S ribosomal subunits. In Clostridium botulinum (strain ATCC 19397 / Type A), this protein is Ribosome maturation factor RimP.